Consider the following 473-residue polypeptide: Photosystem II CP43 reaction center protein (473 aa).

A propeptide spanning residues 1-14 is cleaved from the precursor; sequence MKILYSLRRFYHVE. The residue at position 15 (Thr-15) is an N-acetylthreonine. Thr-15 is subject to Phosphothreonine. The next 5 helical transmembrane spans lie at 69–93, 134–155, 178–200, 255–275, and 291–312; these read LFEVAHFVPEKPMYEQGLILLPHLA, LLGPETLEESFPFFGYVWQDRN, KALYFGGVYDTWAPGGGDVRKIT, KPFAWARRAFVWSGEAYLSYS, and WFNNTAYPSEFYGPTGPEASQA. Glu-367 is a [CaMn4O5] cluster binding site. The chain crosses the membrane as a helical span at residues 447–471; that stretch reads RARAAAAGFEKGIDRDLEPVVYMTP.

It belongs to the PsbB/PsbC family. PsbC subfamily. As to quaternary structure, PSII is composed of 1 copy each of membrane proteins PsbA, PsbB, PsbC, PsbD, PsbE, PsbF, PsbH, PsbI, PsbJ, PsbK, PsbL, PsbM, PsbT, PsbX, PsbY, PsbZ, Psb30/Ycf12, at least 3 peripheral proteins of the oxygen-evolving complex and a large number of cofactors. It forms dimeric complexes. Requires Binds multiple chlorophylls and provides some of the ligands for the Ca-4Mn-5O cluster of the oxygen-evolving complex. It may also provide a ligand for a Cl- that is required for oxygen evolution. PSII binds additional chlorophylls, carotenoids and specific lipids. as cofactor. Post-translationally, phosphorylated in both bundle sheath and mesophyll cells, phosphorylation increases when cells are grown under high rather than low light regimes (70 vs 900 umol photons/m-2/s).

Its subcellular location is the plastid. It is found in the chloroplast thylakoid membrane. In terms of biological role, one of the components of the core complex of photosystem II (PSII). It binds chlorophyll and helps catalyze the primary light-induced photochemical processes of PSII. PSII is a light-driven water:plastoquinone oxidoreductase, using light energy to abstract electrons from H(2)O, generating O(2) and a proton gradient subsequently used for ATP formation. The polypeptide is Photosystem II CP43 reaction center protein (Zea mays (Maize)).